The sequence spans 421 residues: Alpha-1-antiproteinase 2 (421 aa).

An N-terminal signal peptide occupies residues 1–24 (MPSSVPWCLLLLAGLCCLVPSSLA). Asn-73, Asn-110, and Asn-274 each carry an N-linked (GlcNAc...) asparagine glycan. The segment at 376-395 (GTTMWEIMPISLPPDLKFNR) is RCL.

The protein belongs to the serpin family. Post-translationally, N-glycosylated with carbohydrates having biantennary side chains. In terms of tissue distribution, plasma.

The protein localises to the secreted. Functionally, inhibitor of serine proteases. The chain is Alpha-1-antiproteinase 2 from Equus caballus (Horse).